A 144-amino-acid chain; its full sequence is Putative low molecular weight protein-tyrosine-phosphatase (144 aa).

The Nucleophile role is filled by Cys-9. Arg-15 is a catalytic residue. Asp-115 acts as the Proton donor in catalysis.

Belongs to the low molecular weight phosphotyrosine protein phosphatase family.

The catalysed reaction is O-phospho-L-tyrosyl-[protein] + H2O = L-tyrosyl-[protein] + phosphate. This is Putative low molecular weight protein-tyrosine-phosphatase from Klebsiella pneumoniae.